The following is a 520-amino-acid chain: Cytochrome P450 72A68 (520 aa).

Residues 11 to 31 (IILITVTFGLVYAWRVLNWMW) traverse the membrane as a helical segment. Residue cysteine 466 coordinates heme.

Belongs to the cytochrome P450 family. Heme serves as cofactor.

The protein resides in the membrane. It carries out the reaction oleanolate + 3 reduced [NADPH--hemoprotein reductase] + 3 O2 = gypsogenate + 3 oxidized [NADPH--hemoprotein reductase] + 4 H2O + 4 H(+). Catalyzes the carboxylation of oleanolic acid at the C-23 position to form gypsogenic acid. Involved in the hemolytic saponin biosynthetic pathway. In Medicago truncatula (Barrel medic), this protein is Cytochrome P450 72A68.